Reading from the N-terminus, the 62-residue chain is Conotoxin Pn-B0151 (62 aa).

An N-terminal signal peptide occupies residues 1–22 (MRCLPVFVILLLLIASTPSVDA). A propeptide spanning residues 23–48 (LQKTKDDMPLASFHDNVKRILQTLSN) is cleaved from the precursor.

The protein belongs to the conotoxin T superfamily. Post-translationally, contains 2 disulfide bonds that can be either 'C1-C3, C2-C4' or 'C1-C4, C2-C3', since these disulfide connectivities have been observed for conotoxins with cysteine framework V (for examples, see AC P0DQQ7 and AC P81755). In terms of tissue distribution, expressed by the venom duct.

It is found in the secreted. This is Conotoxin Pn-B0151 from Conus pennaceus (Feathered cone).